Reading from the N-terminus, the 442-residue chain is MEQAPVSTIHEIGKHDGQSVTIKGWLYNLRESGKLLFPIFRDGTGLLQGVLFKKNVSPELFDLVKNLTQESSVIVTGNVRAEQRAPGGYEMDVTALEVVQRVPENEPYPITPKEHGIEFLMEHRHLWVRSQRQAAILRIRGEIVRSAHEFFDKQGFTLTEPPILTPAACEGTSTLFPVDYFGDPAFLTQSGQLYIEATAMALGKVYSFGPTFRAEKSKTRRHLTEFWMVEPEVAFAELDDIMKLAEDFITHIVKSVLERRRDDLKTIERDLSKLENIDTPFPRISYDEAVQMLQEGHAKGELESRFEWGGDLGSPDETYISSKFDRPVMIHRYPVEVKAFYMEPDPNNSKVALCVDVLAPEGYGEVIGGSQRMGSYEKLLARIHEHQLPEESFKWYLDLRKFGGVPHSGFGMGIERAVAWICGLDHVRETIPFARTLHRIYP.

The protein belongs to the class-II aminoacyl-tRNA synthetase family. Homodimer.

The protein localises to the cytoplasm. It carries out the reaction tRNA(Asn) + L-asparagine + ATP = L-asparaginyl-tRNA(Asn) + AMP + diphosphate + H(+). This chain is Asparagine--tRNA ligase, found in Koribacter versatilis (strain Ellin345).